We begin with the raw amino-acid sequence, 361 residues long: Chorismate synthase (361 aa).

NADP(+) is bound by residues arginine 48 and arginine 54. Residues 131–133, 243–244, glycine 287, 302–306, and arginine 328 contribute to the FMN site; these read RSS, NA, and KPTSS.

It belongs to the chorismate synthase family. Homotetramer. It depends on FMNH2 as a cofactor.

The catalysed reaction is 5-O-(1-carboxyvinyl)-3-phosphoshikimate = chorismate + phosphate. The protein operates within metabolic intermediate biosynthesis; chorismate biosynthesis; chorismate from D-erythrose 4-phosphate and phosphoenolpyruvate: step 7/7. Functionally, catalyzes the anti-1,4-elimination of the C-3 phosphate and the C-6 proR hydrogen from 5-enolpyruvylshikimate-3-phosphate (EPSP) to yield chorismate, which is the branch point compound that serves as the starting substrate for the three terminal pathways of aromatic amino acid biosynthesis. This reaction introduces a second double bond into the aromatic ring system. This is Chorismate synthase from Rhodopseudomonas palustris (strain HaA2).